The chain runs to 938 residues: Ubiquitin carboxyl-terminal hydrolase Usp2 (938 aa).

6 disordered regions span residues 1–53, 91–117, 130–254, 273–297, 360–410, and 500–610; these read MMLD…KVGA, KVKTTLQPHRRSRAGEDSRNNNYNTSR, FNGN…ISTT, EQNQVQQQEEQPQPSSSKSASHRYP, LSGQ…NLQQ, and KDAT…EKSE. Residues 22-36 show a composition bias toward low complexity; it reads STTKTSSVVATSASS. 4 stretches are compositionally biased toward low complexity: residues 137–158, 167–177, 198–227, and 275–289; these read TTTNSTTINNTTSRNTTSNTSN, STTATATSTST, MNGHTNNNNNNTRNSSNINNGGNNNMQRQQ, and NQVQQQEEQPQPSSS. Residues 392-410 are compositionally biased toward polar residues; that stretch reads ASRSNHGSQAGGSSSNLQQ. 2 stretches are compositionally biased toward low complexity: residues 502–555 and 574–583; these read ATTA…TARS and TSRSSIGTSS. Over residues 592 to 610 the composition is skewed to basic and acidic residues; sequence HNSDDGYKTASSSRDEKSE. Positions 613 to 938 constitute a USP domain; that stretch reads CGLRNIGNTC…SAYILFYERT (326 aa). Residue Cys622 is the Nucleophile of the active site. Residues Cys765, Cys768, Cys814, and Cys817 each contribute to the Zn(2+) site. His895 serves as the catalytic Proton acceptor.

This sequence belongs to the peptidase C19 family. As to quaternary structure, interacts (via N-terminus) with imd (via N-terminus). Interacts with Rpt6.

The enzyme catalyses Thiol-dependent hydrolysis of ester, thioester, amide, peptide and isopeptide bonds formed by the C-terminal Gly of ubiquitin (a 76-residue protein attached to proteins as an intracellular targeting signal).. Its function is as follows. Hydrolase that deubiquitinates polyubiquitinated target proteins. Required for preventing the activation of the Toll signaling cascades under unchallenged conditions. Essential for bodily calcium homeostasis. In terms of biological role, required for preventing the activation of the immune deficiency (Imd) signaling cascade under unchallenged conditions. Regulates the Imd pathway by specifically removing 'Lys-48'-linked ubiquitin from imd. Also promotes imd degradation probably by binding to imd and enhancing its association with the proteasome. The chain is Ubiquitin carboxyl-terminal hydrolase Usp2 from Drosophila melanogaster (Fruit fly).